A 372-amino-acid chain; its full sequence is Glutamate 5-kinase (372 aa).

Lysine 14 contributes to the ATP binding site. Residues serine 54, aspartate 141, and asparagine 153 each coordinate substrate. ATP contacts are provided by residues 173–174 (TD) and 215–221 (TGGMLTK). The 79-residue stretch at 280–358 (AGRLVLDDGA…RDIERLLGYV (79 aa)) folds into the PUA domain.

It belongs to the glutamate 5-kinase family.

It is found in the cytoplasm. It catalyses the reaction L-glutamate + ATP = L-glutamyl 5-phosphate + ADP. It functions in the pathway amino-acid biosynthesis; L-proline biosynthesis; L-glutamate 5-semialdehyde from L-glutamate: step 1/2. Functionally, catalyzes the transfer of a phosphate group to glutamate to form L-glutamate 5-phosphate. In Laribacter hongkongensis (strain HLHK9), this protein is Glutamate 5-kinase.